Reading from the N-terminus, the 289-residue chain is Thymidylate synthase (289 aa).

Residues Arg21 and 150–151 contribute to the dUMP site; that span reads RR. Cys170 (nucleophile) is an active-site residue. DUMP is bound by residues 191–194, Asn202, and 232–234; these read RSGD and HIY. Residue Asp194 participates in (6R)-5,10-methylene-5,6,7,8-tetrahydrofolate binding. Position 288 (Ala288) interacts with (6R)-5,10-methylene-5,6,7,8-tetrahydrofolate.

Belongs to the thymidylate synthase family. Bacterial-type ThyA subfamily. Homodimer.

Its subcellular location is the cytoplasm. The catalysed reaction is dUMP + (6R)-5,10-methylene-5,6,7,8-tetrahydrofolate = 7,8-dihydrofolate + dTMP. It functions in the pathway pyrimidine metabolism; dTTP biosynthesis. In terms of biological role, catalyzes the reductive methylation of 2'-deoxyuridine-5'-monophosphate (dUMP) to 2'-deoxythymidine-5'-monophosphate (dTMP) while utilizing 5,10-methylenetetrahydrofolate (mTHF) as the methyl donor and reductant in the reaction, yielding dihydrofolate (DHF) as a by-product. This enzymatic reaction provides an intracellular de novo source of dTMP, an essential precursor for DNA biosynthesis. The chain is Thymidylate synthase from Mycoplasmopsis synoviae (strain 53) (Mycoplasma synoviae).